A 406-amino-acid polypeptide reads, in one-letter code: Probable G-protein coupled receptor tkr-1 (406 aa).

At Met-1–Ala-47 the chain is on the extracellular side. The chain crosses the membrane as a helical span at residues Ile-48 to Ile-68. Residues Tyr-69–Tyr-76 lie on the Cytoplasmic side of the membrane. A helical transmembrane segment spans residues Gly-77–Val-97. Topologically, residues Gly-98 to Cys-115 are extracellular. The chain crosses the membrane as a helical span at residues Thr-116–Leu-136. Residues Ser-137–Ser-158 are Cytoplasmic-facing. Residues Val-159–Ala-179 traverse the membrane as a helical segment. The Extracellular portion of the chain corresponds to Ala-180–Pro-204. A helical membrane pass occupies residues Val-205–Leu-225. The Cytoplasmic portion of the chain corresponds to Gly-226–Met-261. The chain crosses the membrane as a helical span at residues Leu-262 to Phe-282. Over Ala-283–Tyr-297 the chain is Extracellular. The chain crosses the membrane as a helical span at residues Leu-298–Ala-318. The Cytoplasmic segment spans residues Asn-319–Arg-406.

Belongs to the G-protein coupled receptor 1 family.

It localises to the cell membrane. In terms of biological role, not known. Putative receptor. This chain is Probable G-protein coupled receptor tkr-1 (tkr-1), found in Caenorhabditis elegans.